A 296-amino-acid polypeptide reads, in one-letter code: HTH-type transcriptional activator AmpR (296 aa).

The region spanning 6–63 (LPLNALRAFEASARHLSFTRAAIELCVTQAAVSHQVKSLEERLGVALFKRLPRGLMLT) is the HTH lysR-type domain. Positions 23–42 (FTRAAIELCVTQAAVSHQVK) form a DNA-binding region, H-T-H motif. An includes the LysR substrate-binding / effector-binding domain, involved in binding to specific cell-wall-derived muropeptide products, some of which have signaling functions, leading to disparate responses such as antibiotic resistance, virulence, and host cell inflammation region spans residues 83 to 296 (LLERFEGGHY…EMAAVEARGR (214 aa)). The LysR substrate-binding domain maps to 91 to 289 (HYRDVLTVGA…AFRGWLLEMA (199 aa)).

Belongs to the LysR transcriptional regulatory family. In terms of assembly, homodimer.

It localises to the cytoplasm. It is found in the membrane. Functionally, transcription regulator that plays a critical role in the expression of beta-lactamase AmpC, acting by positive regulation of the ampC gene. Has a wider role in the regulation of expression of genes involved in proteolysis, quorum sensing, and virulence. Acts by binding directly to the promoter region of the ampC gene. Probably does not regulate transcription of its own gene. This Pseudomonas aeruginosa (strain ATCC 15692 / DSM 22644 / CIP 104116 / JCM 14847 / LMG 12228 / 1C / PRS 101 / PAO1) protein is HTH-type transcriptional activator AmpR (ampR).